A 549-amino-acid chain; its full sequence is MDSEERSKKRLRLWSRAVVHFSLCFAIGVFAALLPLAATGATSIDSIRASFRPTVAATPPVPELDLLLIVTVTRPDDDDDDGMSQEASLTRLGHTLRLVEPPLLWIVVGAENTTATARAVNALRGTRVMFRHLTYAAENFTGPAGDEVDYQMNVALSHIQLHRLPGVVHFAAASSVYDLRFFQQLRQTRGIAAWPIATVSSADQTVKLEGPTCNSSQITGWYSKDSSSNITETTWDSSSNTTQTTWDSSSNKTQTTTLAALDTNASKQNSSSGPPEINMHAVGFKSSMLWDSERFTRRDNSSTGINQDLIQAVRQMMINDEDKKRGIPSDCSDSQIMLWHLDMPRHTPKIEQATPEKESLTKGDEEESHDMTLDNVVPKTEEHETLEKENLMKGDEKGSHDMMLDNVVAKIEEQETPEKENLTKGEEKESHDMMLDNVVAKIEEQETPEKENLTKGDEKESHDMMLDNVVAKIDEQETTEKESLTKGDEKESHDMMLDNVVAKIEEQETPEKESLTKGDEKETHDMMLDNVVAKIEEQETPEEGKTKEG.

At 1 to 16 (MDSEERSKKRLRLWSR) the chain is on the cytoplasmic side. The helical; Signal-anchor for type II membrane protein transmembrane segment at 17 to 37 (AVVHFSLCFAIGVFAALLPLA) threads the bilayer. Over 38–549 (ATGATSIDSI…TPEEGKTKEG (512 aa)) the chain is Lumenal. N-linked (GlcNAc...) asparagine glycans are attached at residues asparagine 112, asparagine 139, asparagine 214, asparagine 229, asparagine 240, asparagine 251, asparagine 264, asparagine 269, and asparagine 300. Residues 232 to 252 (ETTWDSSSNTTQTTWDSSSNK) form a disordered region. Positions 350-363 (IEQATPEKESLTKG) are enriched in basic and acidic residues. Disordered regions lie at residues 350–371 (IEQATPEKESLTKGDEEESHDM), 413–432 (EQETPEKENLTKGEEKESHD), and 441–524 (KIEE…KETH). 2 N-linked (GlcNAc...) asparagine glycosylation sites follow: asparagine 421 and asparagine 452. Basic and acidic residues-rich tracts occupy residues 441-465 (KIEEQETPEKENLTKGDEKESHDMM), 472-496 (KIDEQETTEKESLTKGDEKESHDMM), and 503-524 (KIEEQETPEKESLTKGDEKETH).

The protein belongs to the glycosyltransferase 43 family.

The protein resides in the golgi apparatus membrane. Its function is as follows. Involved in the synthesis of glucuronoxylan hemicellulose in secondary cell walls. This chain is Probable glucuronosyltransferase Os01g0157700, found in Oryza sativa subsp. japonica (Rice).